We begin with the raw amino-acid sequence, 204 residues long: Probable chorismate pyruvate-lyase (204 aa).

Substrate is bound by residues Arg-78, Leu-131, and Glu-190.

This sequence belongs to the UbiC family.

The protein resides in the cytoplasm. The catalysed reaction is chorismate = 4-hydroxybenzoate + pyruvate. The protein operates within cofactor biosynthesis; ubiquinone biosynthesis. In terms of biological role, removes the pyruvyl group from chorismate, with concomitant aromatization of the ring, to provide 4-hydroxybenzoate (4HB) for the ubiquinone pathway. This chain is Probable chorismate pyruvate-lyase, found in Shewanella frigidimarina (strain NCIMB 400).